The following is a 163-amino-acid chain: ATP synthase subunit b' (163 aa).

The chain crosses the membrane as a helical span at residues 28-45; that stretch reads LMAIQFLLLALILNATLY.

Belongs to the ATPase B chain family. As to quaternary structure, F-type ATPases have 2 components, F(1) - the catalytic core - and F(0) - the membrane proton channel. F(1) has five subunits: alpha(3), beta(3), gamma(1), delta(1), epsilon(1). F(0) has four main subunits: a(1), b(1), b'(1) and c(10-14). The alpha and beta chains form an alternating ring which encloses part of the gamma chain. F(1) is attached to F(0) by a central stalk formed by the gamma and epsilon chains, while a peripheral stalk is formed by the delta, b and b' chains.

The protein localises to the cellular thylakoid membrane. In terms of biological role, f(1)F(0) ATP synthase produces ATP from ADP in the presence of a proton or sodium gradient. F-type ATPases consist of two structural domains, F(1) containing the extramembraneous catalytic core and F(0) containing the membrane proton channel, linked together by a central stalk and a peripheral stalk. During catalysis, ATP synthesis in the catalytic domain of F(1) is coupled via a rotary mechanism of the central stalk subunits to proton translocation. Its function is as follows. Component of the F(0) channel, it forms part of the peripheral stalk, linking F(1) to F(0). The b'-subunit is a diverged and duplicated form of b found in plants and photosynthetic bacteria. This is ATP synthase subunit b' from Nostoc sp. (strain PCC 7120 / SAG 25.82 / UTEX 2576).